A 1070-amino-acid chain; its full sequence is DNA-directed RNA polymerase subunit beta (1070 aa).

It belongs to the RNA polymerase beta chain family. As to quaternary structure, in plastids the minimal PEP RNA polymerase catalytic core is composed of four subunits: alpha, beta, beta', and beta''. When a (nuclear-encoded) sigma factor is associated with the core the holoenzyme is formed, which can initiate transcription.

It localises to the plastid. The protein resides in the chloroplast. The catalysed reaction is RNA(n) + a ribonucleoside 5'-triphosphate = RNA(n+1) + diphosphate. Functionally, DNA-dependent RNA polymerase catalyzes the transcription of DNA into RNA using the four ribonucleoside triphosphates as substrates. In Illicium oligandrum (Star anise), this protein is DNA-directed RNA polymerase subunit beta.